We begin with the raw amino-acid sequence, 350 residues long: S-adenosylmethionine:tRNA ribosyltransferase-isomerase (350 aa).

The protein belongs to the QueA family. As to quaternary structure, monomer.

It localises to the cytoplasm. The catalysed reaction is 7-aminomethyl-7-carbaguanosine(34) in tRNA + S-adenosyl-L-methionine = epoxyqueuosine(34) in tRNA + adenine + L-methionine + 2 H(+). The protein operates within tRNA modification; tRNA-queuosine biosynthesis. Its function is as follows. Transfers and isomerizes the ribose moiety from AdoMet to the 7-aminomethyl group of 7-deazaguanine (preQ1-tRNA) to give epoxyqueuosine (oQ-tRNA). This is S-adenosylmethionine:tRNA ribosyltransferase-isomerase from Vibrio vulnificus (strain CMCP6).